Consider the following 253-residue polypeptide: 5-oxoprolinase subunit A (253 aa).

It belongs to the LamB/PxpA family. Forms a complex composed of PxpA, PxpB and PxpC.

The enzyme catalyses 5-oxo-L-proline + ATP + 2 H2O = L-glutamate + ADP + phosphate + H(+). In terms of biological role, catalyzes the cleavage of 5-oxoproline to form L-glutamate coupled to the hydrolysis of ATP to ADP and inorganic phosphate. The sequence is that of 5-oxoprolinase subunit A from Shouchella clausii (strain KSM-K16) (Alkalihalobacillus clausii).